Reading from the N-terminus, the 594-residue chain is MASEHIEHKLALLPDKPGCYQMKNLNSQIIYVGKAKNLKNRVRSYFKSSHEGKTAKLVSEIADFDYIVTSSDKEAFLLEITLIQKFQPYYNIKLKKGTGYPYIKITNEKDPRMEIVSSVRRDGGFYFGPYPNVYAAEETLHFLEKVYPLRRCNGFQGRPCLYYHMGQCLGACFQEVPKEEYDQQIAKIKSFLRGNVAKIKQSLQTKMQKASEAMEFERAADIRDQIHYIEVTVEKQKIISNDSTPRDLFNFYLDKGWLSIQIFFIRQSRLIKREKRLFPIATDVNDELSSFILQFYNNKNKVLPNEILVPSGLDNKIMAEILGVPVRTPQRGEKKNLLELAKENAQITLEEKFRLMELDESKTTGAMKEITDALGIPEGHRIEAFDHSHIQGSELVSAMVVFTDGKPDKKMYRKFKLNTVDHADEAASTREVIRRRYVRLLKEKQSLPDLILMDGGDIQLNAAKDVLVNELSLHIPVAGMVKNDKHKTSDLIFGSQDQRVQLDPKSQGFYLVQRIQDEVHRFAITFHRQLHAKNSLASQLDLIQGVGPKTRNKLLKSFGSLNKIRDANLKEIEELGIPEKVAKTIKVSLSVHGK.

In terms of domain architecture, GIY-YIG spans 15–92 (DKPGCYQMKN…IQKFQPYYNI (78 aa)). The region spanning 197-232 (AKIKQSLQTKMQKASEAMEFERAADIRDQIHYIEVT) is the UVR domain.

It belongs to the UvrC family. In terms of assembly, interacts with UvrB in an incision complex.

The protein resides in the cytoplasm. Its function is as follows. The UvrABC repair system catalyzes the recognition and processing of DNA lesions. UvrC both incises the 5' and 3' sides of the lesion. The N-terminal half is responsible for the 3' incision and the C-terminal half is responsible for the 5' incision. The protein is UvrABC system protein C of Pediococcus pentosaceus (strain ATCC 25745 / CCUG 21536 / LMG 10740 / 183-1w).